We begin with the raw amino-acid sequence, 213 residues long: Ribonuclease HII (213 aa).

One can recognise an RNase H type-2 domain in the interval 20 to 209 (ELVAGVDEVG…VRQAYEALEG (190 aa)). Residues Asp26, Glu27, and Asp118 each contribute to the a divalent metal cation site.

The protein belongs to the RNase HII family. Mn(2+) is required as a cofactor. The cofactor is Mg(2+).

The protein localises to the cytoplasm. It carries out the reaction Endonucleolytic cleavage to 5'-phosphomonoester.. Functionally, endonuclease that specifically degrades the RNA of RNA-DNA hybrids. The chain is Ribonuclease HII from Pseudomonas fluorescens (strain Pf0-1).